The chain runs to 188 residues: Murein DD-endopeptidase MepS/Murein LD-carboxypeptidase (188 aa).

The N-terminal stretch at 1 to 26 (MVKSQPILRYILRGIPAIAVAVLLSA) is a signal peptide. A lipid anchor (N-palmitoyl cysteine) is attached at Cys27. Cys27 is lipidated: S-diacylglycerol cysteine. The NlpC/P60 domain maps to 64 to 185 (VDVKSRIMDQ…KRYNEARRVL (122 aa)). Cys94 serves as the catalytic Nucleophile. The Proton acceptor role is filled by His145. The active site involves His157.

The protein belongs to the peptidase C40 family. Monomer.

The protein resides in the cell outer membrane. It carries out the reaction N-acetyl-D-glucosaminyl-N-acetylmuramoyl-L-alanyl-meso-2,6-diaminoheptanedioyl-D-alanine + H2O = N-acetyl-D-glucosaminyl-N-acetylmuramoyl-L-alanyl-meso-2,6-diaminoheptanedioate + D-alanine. It functions in the pathway cell wall biogenesis; cell wall polysaccharide biosynthesis. In terms of biological role, a murein DD-endopeptidase with specificity for D-Ala-meso-diaminopimelic acid (mDAP) cross-links. Its role is probably to cleave D-Ala-mDAP cross-links to allow insertion of new glycans and thus cell wall expansion. Functionally redundant with MepM and MepH. Also has weak LD-carboxypeptidase activity on L-mDAP-D-Ala peptide bonds. In Escherichia coli O157:H7, this protein is Murein DD-endopeptidase MepS/Murein LD-carboxypeptidase (mepS).